A 295-amino-acid chain; its full sequence is MTNVTGTERVKRGMAEMQKGGVIMDVINAEQAKIAEEAGAVAIMALERVPADIRAAGGVSRMADPTIVEEVMGAVSIPVMAKCRIGHLVEARVLESLGVDYIDESEVLTPADEVYHLNKRDYTVPFVCGCRDIGEAARRIAEGASMLRTKGEPGTGNIVEAVRHMRQVNAEIRQVASLREDELMTYAKNTGAPYEVLLEIKRLGRLPVVNFAAGGVATPADAALMMQLGADGVFVGSGIFKSENPAKFARAIVEATTHYEDYELIASLSKGLGNAMKGIEISTLLPEQRMQERGW.

Aspartate 25 contacts D-ribose 5-phosphate. Residue lysine 82 is the Schiff-base intermediate with D-ribose 5-phosphate of the active site. Glycine 154 lines the D-ribose 5-phosphate pocket. Arginine 166 lines the D-glyceraldehyde 3-phosphate pocket. Residues glycine 215 and 236-237 each bind D-ribose 5-phosphate; that span reads GS.

The protein belongs to the PdxS/SNZ family. In terms of assembly, in the presence of PdxT, forms a dodecamer of heterodimers.

The enzyme catalyses aldehydo-D-ribose 5-phosphate + D-glyceraldehyde 3-phosphate + L-glutamine = pyridoxal 5'-phosphate + L-glutamate + phosphate + 3 H2O + H(+). The protein operates within cofactor biosynthesis; pyridoxal 5'-phosphate biosynthesis. Catalyzes the formation of pyridoxal 5'-phosphate from ribose 5-phosphate (RBP), glyceraldehyde 3-phosphate (G3P) and ammonia. The ammonia is provided by the PdxT subunit. Can also use ribulose 5-phosphate and dihydroxyacetone phosphate as substrates, resulting from enzyme-catalyzed isomerization of RBP and G3P, respectively. This Bacillus anthracis (strain A0248) protein is Pyridoxal 5'-phosphate synthase subunit PdxS.